A 96-amino-acid polypeptide reads, in one-letter code: HIG1 domain family member 1C (96 aa).

The Cytoplasmic segment spans residues 1–26 (MSSDEWSAAEDEGQLSRLLRKSRDSP). An HIG1 domain is found at 1–91 (MSSDEWSAAE…YKDYIRPRFF (91 aa)). Residues 27–44 (FVPVGMAGFVAVLSYGLY) traverse the membrane as a helical segment. The Extracellular segment spans residues 45–58 (KLNSRREQKMSLHL). A helical membrane pass occupies residues 59-81 (IHVRVAAQGCVVGAVTLGVLYSM). Topologically, residues 82–96 (YKDYIRPRFFNVPKK) are cytoplasmic.

Its subcellular location is the membrane. The protein is HIG1 domain family member 1C (Higd1c) of Mus musculus (Mouse).